A 522-amino-acid chain; its full sequence is MALLSQAGGSYTVVPSGVCSKAGTKAVVSGGVRNLDVLRMKEAFGSSYSRSLSTKSMLLHSVKRSKRGHQLIVAASPPTEEAVVATEPLTREDLIAYLASGCKTKDKYRIGTEHEKFGFEVNTLRPMKYDQIAELLNGIAERFEWEKVMEGDKIIGLKQGKQSISLEPGGQFELSGAPLETLHQTCAEVNSHLYQVKAVAEEMGIGFLGIGFQPKWRREDIPIMPKGRYDIMRNYMPKVGTLGLDMMLRTCTVQVNLDFSSEADMIRKFRAGLALQPIATALFANSPFTEGKPNGFLSMRSHIWTDTDKDRTGMLPFVFDDSFGFEQYVDYALDVPMYFAYRKNKYIDCTGMTFRQFLAGKLPCLPGELPSYNDWENHLTTIFPEVRLKRYLEMRGADGGPWRRLCALPAFWVGLLYDDDSLQAILDLTADWTPAEREMLRNKVPVTGLKTPFRDGLLKHVAEDVLKLAKDGLERRGYKEAGFLNAVDEVVRTGVTPAEKLLEMYNGEWGQSVDPVFEELLY.

Cystine bridges form between Cys-186–Cys-406 and Cys-349–Cys-364.

The protein belongs to the carboxylate-amine ligase family. Glutamate--cysteine ligase type 2 subfamily. In terms of assembly, homodimer or monomer when oxidized or reduced, respectively. Post-translationally, the Cys-186-Cys-406 disulfide bridge is known to modulate the enzyme activity according to the redox status. The oxidized form constitutes the active enzyme. In terms of tissue distribution, abundant in leaves and roots. Expressed to a high level in leaf trichomes of mature plant.

It is found in the plastid. The protein resides in the chloroplast. The enzyme catalyses L-cysteine + L-glutamate + ATP = gamma-L-glutamyl-L-cysteine + ADP + phosphate + H(+). Its pathway is sulfur metabolism; glutathione biosynthesis; glutathione from L-cysteine and L-glutamate: step 1/2. Its activity is regulated as follows. Feedback inhibition by glutathione. Inhibited by buthionine sulfoximine and cystamine. Functionally, seems to play an important role in controlling the expression of resistance responses like the regulation of salicylic acid (SA) and phytoalexin (camalexin) production. Involved in resistance to fungal and bacterial pathogens. Required for the regulation of cell proliferation in root apical meristems through the GSH-dependent developmental pathway. Also participates in the detoxification process, the antioxidant response and is essential for embryo development and proper seed maturation. This Arabidopsis thaliana (Mouse-ear cress) protein is Glutamate--cysteine ligase, chloroplastic (GSH1).